A 436-amino-acid polypeptide reads, in one-letter code: GTPase Der (436 aa).

2 consecutive EngA-type G domains span residues 4 to 167 (PVIA…PKIE) and 176 to 351 (IRFS…ESHS). Residues 10–17 (GRPNVGKS), 57–61 (DTGGI), 119–122 (NKVD), 182–189 (GRPNVGKS), 229–233 (DTAGM), and 294–297 (NKWD) each bind GTP. The KH-like domain maps to 352-436 (IRVQTNVLND…PIHIIARARD (85 aa)).

This sequence belongs to the TRAFAC class TrmE-Era-EngA-EngB-Septin-like GTPase superfamily. EngA (Der) GTPase family. Associates with the 50S ribosomal subunit.

Functionally, GTPase that plays an essential role in the late steps of ribosome biogenesis. In Bacillus cereus (strain G9842), this protein is GTPase Der.